We begin with the raw amino-acid sequence, 154 residues long: Snaclec dabocetin subunit alpha (154 aa).

Positions 1–23 are cleaved as a signal peptide; it reads MGRFISVSFGLLVVFLSLSGTGA. Cystine bridges form between cysteine 25–cysteine 36, cysteine 53–cysteine 148, and cysteine 123–cysteine 140. The region spanning 32-149 is the C-type lectin domain; sequence HEGHCYKVFK…CGDKNPFICK (118 aa).

It belongs to the snaclec family. Heterodimer of subunits alpha and beta; disulfide-linked. Expressed by the venom gland.

The protein localises to the secreted. Its function is as follows. Inhibits ristocetin-induced platelet aggregation via binding to platelet glycoprotein Ibalpha (GP1BA). The protein is Snaclec dabocetin subunit alpha of Daboia siamensis (Eastern Russel's viper).